A 177-amino-acid chain; its full sequence is Peptide methionine sulfoxide reductase MsrA (177 aa).

The active site involves cysteine 10.

This sequence belongs to the MsrA Met sulfoxide reductase family.

The catalysed reaction is L-methionyl-[protein] + [thioredoxin]-disulfide + H2O = L-methionyl-(S)-S-oxide-[protein] + [thioredoxin]-dithiol. It catalyses the reaction [thioredoxin]-disulfide + L-methionine + H2O = L-methionine (S)-S-oxide + [thioredoxin]-dithiol. Functionally, has an important function as a repair enzyme for proteins that have been inactivated by oxidation. Catalyzes the reversible oxidation-reduction of methionine sulfoxide in proteins to methionine. In Saccharolobus solfataricus (strain ATCC 35092 / DSM 1617 / JCM 11322 / P2) (Sulfolobus solfataricus), this protein is Peptide methionine sulfoxide reductase MsrA.